Reading from the N-terminus, the 125-residue chain is Large ribosomal subunit protein bL12 (125 aa).

It belongs to the bacterial ribosomal protein bL12 family. In terms of assembly, homodimer. Part of the ribosomal stalk of the 50S ribosomal subunit. Forms a multimeric L10(L12)X complex, where L10 forms an elongated spine to which 2 to 4 L12 dimers bind in a sequential fashion. Binds GTP-bound translation factors.

Its function is as follows. Forms part of the ribosomal stalk which helps the ribosome interact with GTP-bound translation factors. Is thus essential for accurate translation. In Coprothermobacter proteolyticus (strain ATCC 35245 / DSM 5265 / OCM 4 / BT), this protein is Large ribosomal subunit protein bL12.